The primary structure comprises 796 residues: Protein translocase subunit SecA 2 (796 aa).

ATP is bound by residues Q84, 102–106 (GEGKT), and D496.

This sequence belongs to the SecA family. In terms of assembly, monomer and homodimer. Part of the essential Sec protein translocation apparatus which comprises SecA, SecYEG and auxiliary proteins SecDF. Other proteins may also be involved.

The protein resides in the cell membrane. The protein localises to the cytoplasm. It catalyses the reaction ATP + H2O + cellular proteinSide 1 = ADP + phosphate + cellular proteinSide 2.. Part of the Sec protein translocase complex. Interacts with the SecYEG preprotein conducting channel. Has a central role in coupling the hydrolysis of ATP to the transfer of proteins into and across the cell membrane, serving as an ATP-driven molecular motor driving the stepwise translocation of polypeptide chains across the membrane. The polypeptide is Protein translocase subunit SecA 2 (Staphylococcus epidermidis (strain ATCC 35984 / DSM 28319 / BCRC 17069 / CCUG 31568 / BM 3577 / RP62A)).